The following is a 540-amino-acid chain: Malolactic enzyme (540 aa).

The active-site Proton donor is tyrosine 90. Lysine 163 serves as the catalytic Proton acceptor. Lysine 163 contacts substrate. Residues glutamate 234, aspartate 235, and aspartate 258 each contribute to the Mn(2+) site. NAD(+) is bound by residues 291–294, asparagine 403, and asparagine 448; that span reads GGSA. Asparagine 448 is a binding site for substrate.

The protein belongs to the malic enzymes family. Homodimer. The cofactor is Mn(2+). It depends on NAD(+) as a cofactor.

It carries out the reaction (S)-malate + H(+) = (S)-lactate + CO2. Functionally, involved in the malolactic fermentation (MLF) of wine, which results in a natural decrease in acidity and favorable changes in wine flavors. Catalyzes the decarboxylation of L-malate to L-lactate. The sequence is that of Malolactic enzyme from Lactococcus lactis subsp. lactis (strain IL1403) (Streptococcus lactis).